Reading from the N-terminus, the 317-residue chain is MKPVFLDFEQPIAELTNKIDELRFVQDESAVDISDEIHRLQKKSNDLTKSIFSKLTPAQISQVSRHPQRPYTLDYIDALFTDFEELHGDRHFADDHAIVGGLARFNGQSVVVVGHQKGRDTKEKIRRNFGMPRPEGYRKALRLMKTAEKFGLPVMTFIDTPGAYPGIGAEERGQSEAIGKNLYELTRLRVPVLCTVIGEGGSGGALAVAVGDYVNMLQYSTYSVISPEGCASILWKTAEKAADAAQALGITADRLQKLDLVDTVIKEPLGGAHRDFGQTMKNVKAVLEKQLHEAQSIPLADLLSRRFDRIMAYGKFS.

A CoA carboxyltransferase C-terminal domain is found at 39–293 (RLQKKSNDLT…KAVLEKQLHE (255 aa)).

It belongs to the AccA family. Acetyl-CoA carboxylase is a heterohexamer composed of biotin carboxyl carrier protein (AccB), biotin carboxylase (AccC) and two subunits each of ACCase subunit alpha (AccA) and ACCase subunit beta (AccD).

The protein localises to the cytoplasm. The enzyme catalyses N(6)-carboxybiotinyl-L-lysyl-[protein] + acetyl-CoA = N(6)-biotinyl-L-lysyl-[protein] + malonyl-CoA. The protein operates within lipid metabolism; malonyl-CoA biosynthesis; malonyl-CoA from acetyl-CoA: step 1/1. Its function is as follows. Component of the acetyl coenzyme A carboxylase (ACC) complex. First, biotin carboxylase catalyzes the carboxylation of biotin on its carrier protein (BCCP) and then the CO(2) group is transferred by the carboxyltransferase to acetyl-CoA to form malonyl-CoA. The sequence is that of Acetyl-coenzyme A carboxylase carboxyl transferase subunit alpha from Neisseria gonorrhoeae (strain NCCP11945).